Reading from the N-terminus, the 106-residue chain is Large ribosomal subunit protein uL24 (106 aa).

Belongs to the universal ribosomal protein uL24 family. As to quaternary structure, part of the 50S ribosomal subunit.

In terms of biological role, one of two assembly initiator proteins, it binds directly to the 5'-end of the 23S rRNA, where it nucleates assembly of the 50S subunit. One of the proteins that surrounds the polypeptide exit tunnel on the outside of the subunit. The chain is Large ribosomal subunit protein uL24 from Parabacteroides distasonis (strain ATCC 8503 / DSM 20701 / CIP 104284 / JCM 5825 / NCTC 11152).